A 360-amino-acid chain; its full sequence is Phospho-N-acetylmuramoyl-pentapeptide-transferase (360 aa).

Over Met-1–Arg-25 the chain is Periplasmic. Residues Ala-26–Ala-46 traverse the membrane as a helical segment. Residues Arg-47–Thr-71 lie on the Cytoplasmic side of the membrane. Residues Pro-72 to Tyr-92 form a helical membrane-spanning segment. Position 93 (Pro-93) is a topological domain, periplasmic. A helical transmembrane segment spans residues Ser-94 to Val-114. Topologically, residues Asp-115–Arg-131 are cytoplasmic. The helical transmembrane segment at Trp-132 to Gly-152 threads the bilayer. The Periplasmic portion of the chain corresponds to Lys-153–Asp-167. A helical membrane pass occupies residues Val-168 to Gly-188. Residues Asn-189–Asp-198 lie on the Cytoplasmic side of the membrane. A helical membrane pass occupies residues Gly-199–Thr-219. Topologically, residues Gly-220–His-235 are periplasmic. Residues Ala-236–Phe-256 traverse the membrane as a helical segment. At Asn-257–Gln-262 the chain is on the cytoplasmic side. A helical membrane pass occupies residues Val-263–Leu-283. At Leu-284 to Glu-287 the chain is on the periplasmic side. Residues Phe-288–Val-308 traverse the membrane as a helical segment. At Gly-309 to Arg-337 the chain is on the cytoplasmic side. A helical membrane pass occupies residues Val-338–Lys-358. Over Val-359–Arg-360 the chain is Periplasmic.

This sequence belongs to the glycosyltransferase 4 family. MraY subfamily. The cofactor is Mg(2+).

It is found in the cell inner membrane. It carries out the reaction UDP-N-acetyl-alpha-D-muramoyl-L-alanyl-gamma-D-glutamyl-meso-2,6-diaminopimeloyl-D-alanyl-D-alanine + di-trans,octa-cis-undecaprenyl phosphate = di-trans,octa-cis-undecaprenyl diphospho-N-acetyl-alpha-D-muramoyl-L-alanyl-D-glutamyl-meso-2,6-diaminopimeloyl-D-alanyl-D-alanine + UMP. It participates in cell wall biogenesis; peptidoglycan biosynthesis. Catalyzes the initial step of the lipid cycle reactions in the biosynthesis of the cell wall peptidoglycan: transfers peptidoglycan precursor phospho-MurNAc-pentapeptide from UDP-MurNAc-pentapeptide onto the lipid carrier undecaprenyl phosphate, yielding undecaprenyl-pyrophosphoryl-MurNAc-pentapeptide, known as lipid I. This chain is Phospho-N-acetylmuramoyl-pentapeptide-transferase, found in Salmonella gallinarum (strain 287/91 / NCTC 13346).